A 190-amino-acid polypeptide reads, in one-letter code: DNA dC-&gt;dU-editing enzyme APOBEC-3C (190 aa).

The 110-residue stretch at 29–138 (DRNETWLCFT…TDYQEGLRSL (110 aa)) folds into the CMP/dCMP-type deaminase domain. His66, Cys97, and Cys100 together coordinate Zn(2+).

It belongs to the cytidine and deoxycytidylate deaminase family. Homodimer. Interacts with TRIB3. Requires Zn(2+) as cofactor.

The protein localises to the nucleus. It is found in the cytoplasm. The catalysed reaction is a 2'-deoxycytidine in single-stranded DNA + H2O + H(+) = a 2'-deoxyuridine in single-stranded DNA + NH4(+). Its function is as follows. DNA deaminase (cytidine deaminase) which acts as an inhibitor of retrovirus replication and retrotransposon mobility via deaminase-dependent and -independent mechanisms. May also play a role in the epigenetic regulation of gene expression through the process of active DNA demethylation. The polypeptide is DNA dC-&gt;dU-editing enzyme APOBEC-3C (APOBEC3C) (Gorilla gorilla gorilla (Western lowland gorilla)).